We begin with the raw amino-acid sequence, 292 residues long: Ribosomal protein L11 methyltransferase (292 aa).

Residues T144, G165, D187, and N229 each contribute to the S-adenosyl-L-methionine site.

This sequence belongs to the methyltransferase superfamily. PrmA family.

The protein localises to the cytoplasm. It catalyses the reaction L-lysyl-[protein] + 3 S-adenosyl-L-methionine = N(6),N(6),N(6)-trimethyl-L-lysyl-[protein] + 3 S-adenosyl-L-homocysteine + 3 H(+). In terms of biological role, methylates ribosomal protein L11. This chain is Ribosomal protein L11 methyltransferase, found in Pseudomonas fluorescens (strain Pf0-1).